The sequence spans 61 residues: Alpha-conotoxine-like Am1.4 (61 aa).

A signal peptide spans methionine 1–serine 21. The propeptide occupies phenylalanine 22–lysine 44.

This sequence belongs to the conotoxin A superfamily. Post-translationally, is not hydroxylated. Contains 2 disulfide bonds. As to expression, expressed by the venom duct.

The protein resides in the secreted. Its function is as follows. Alpha-conotoxins act on postsynaptic membranes, they bind to the nicotinic acetylcholine receptors (nAChR) and thus inhibit them. The sequence is that of Alpha-conotoxine-like Am1.4 from Conus amadis (Amadis cone).